A 394-amino-acid polypeptide reads, in one-letter code: V-type proton ATPase subunit C (394 aa).

A Phosphoserine modification is found at Ser-17.

The protein belongs to the V-ATPase C subunit family. In terms of assembly, V-ATPase is a heteromultimeric enzyme composed of a peripheral catalytic V1 complex (components A to H) attached to an integral membrane V0 proton pore complex (components: a, c, c', c'', d, e, f and VOA1).

The protein localises to the cytoplasm. The protein resides in the vacuole membrane. Functionally, subunit of the V1 complex of vacuolar(H+)-ATPase (V-ATPase), a multisubunit enzyme composed of a peripheral complex (V1) that hydrolyzes ATP and a membrane integral complex (V0) that translocates protons. V-ATPase is responsible for acidifying and maintaining the pH of intracellular compartments. Subunit C is necessary for the assembly of the catalytic sector of the enzyme and is likely to have a specific function in its catalytic activity. Reversibly leaves the enzyme after glucose depletion, causing the catalytic subcomplex V1 to detach from the V0 section. This is V-type proton ATPase subunit C from Schizosaccharomyces pombe (strain 972 / ATCC 24843) (Fission yeast).